Reading from the N-terminus, the 199-residue chain is Proteasome subunit beta 2 (199 aa).

Residues 1–6 constitute a propeptide, removed in mature form; by autocatalysis; sequence MEKKTG. Catalysis depends on Thr-7, which acts as the Nucleophile.

It belongs to the peptidase T1B family. The 20S proteasome core is composed of 14 alpha and 14 beta subunits that assemble into four stacked heptameric rings, resulting in a barrel-shaped structure. The two inner rings, each composed of seven catalytic beta subunits, are sandwiched by two outer rings, each composed of seven alpha subunits. The catalytic chamber with the active sites is on the inside of the barrel. Has a gated structure, the ends of the cylinder being occluded by the N-termini of the alpha-subunits. Is capped at one or both ends by the proteasome regulatory ATPase, PAN.

Its subcellular location is the cytoplasm. The catalysed reaction is Cleavage of peptide bonds with very broad specificity.. The formation of the proteasomal ATPase PAN-20S proteasome complex, via the docking of the C-termini of PAN into the intersubunit pockets in the alpha-rings, triggers opening of the gate for substrate entry. Interconversion between the open-gate and close-gate conformations leads to a dynamic regulation of the 20S proteasome proteolysis activity. Functionally, component of the proteasome core, a large protease complex with broad specificity involved in protein degradation. This chain is Proteasome subunit beta 2, found in Thermococcus kodakarensis (strain ATCC BAA-918 / JCM 12380 / KOD1) (Pyrococcus kodakaraensis (strain KOD1)).